The chain runs to 98 residues: Co-chaperonin GroES (98 aa).

The segment at 32–56 (NAKEKPQQGEVLAVGPGRRDDEGKR) is disordered.

Belongs to the GroES chaperonin family. Heptamer of 7 subunits arranged in a ring. Interacts with the chaperonin GroEL.

Its subcellular location is the cytoplasm. In terms of biological role, together with the chaperonin GroEL, plays an essential role in assisting protein folding. The GroEL-GroES system forms a nano-cage that allows encapsulation of the non-native substrate proteins and provides a physical environment optimized to promote and accelerate protein folding. GroES binds to the apical surface of the GroEL ring, thereby capping the opening of the GroEL channel. This is Co-chaperonin GroES from Bifidobacterium animalis subsp. lactis (strain AD011).